The sequence spans 286 residues: ATP synthase gamma chain (286 aa).

It belongs to the ATPase gamma chain family. As to quaternary structure, F-type ATPases have 2 components, CF(1) - the catalytic core - and CF(0) - the membrane proton channel. CF(1) has five subunits: alpha(3), beta(3), gamma(1), delta(1), epsilon(1). CF(0) has three main subunits: a, b and c.

The protein localises to the cell inner membrane. In terms of biological role, produces ATP from ADP in the presence of a proton gradient across the membrane. The gamma chain is believed to be important in regulating ATPase activity and the flow of protons through the CF(0) complex. The sequence is that of ATP synthase gamma chain from Pseudomonas syringae pv. tomato (strain ATCC BAA-871 / DC3000).